The primary structure comprises 81 residues: Photosystem I iron-sulfur center (81 aa).

2 4Fe-4S ferredoxin-type domains span residues 2 to 31 and 39 to 68; these read SHTV…MVPW and IASS…IRVY. [4Fe-4S] cluster contacts are provided by Cys-11, Cys-14, Cys-17, Cys-21, Cys-48, Cys-51, Cys-54, and Cys-58.

As to quaternary structure, the cyanobacterial PSI reaction center is composed of one copy each of PsaA,B,C,D,E,F,I,J,K,L,M and X, and forms trimeric complexes. Requires [4Fe-4S] cluster as cofactor.

It localises to the cellular thylakoid membrane. The catalysed reaction is reduced [plastocyanin] + hnu + oxidized [2Fe-2S]-[ferredoxin] = oxidized [plastocyanin] + reduced [2Fe-2S]-[ferredoxin]. Functionally, apoprotein for the two 4Fe-4S centers FA and FB of photosystem I (PSI); essential for photochemical activity. FB is the terminal electron acceptor of PSI, donating electrons to ferredoxin. The C-terminus interacts with PsaA/B/D and helps assemble the protein into the PSI complex. Required for binding of PsaD and PsaE to PSI. PSI is a plastocyanin/cytochrome c6-ferredoxin oxidoreductase, converting photonic excitation into a charge separation, which transfers an electron from the donor P700 chlorophyll pair to the spectroscopically characterized acceptors A0, A1, FX, FA and FB in turn. The sequence is that of Photosystem I iron-sulfur center from Microchaete diplosiphon (Fremyella diplosiphon).